Reading from the N-terminus, the 282-residue chain is Bis(5'-nucleosyl)-tetraphosphatase, symmetrical (282 aa).

It belongs to the Ap4A hydrolase family.

The enzyme catalyses P(1),P(4)-bis(5'-adenosyl) tetraphosphate + H2O = 2 ADP + 2 H(+). Functionally, hydrolyzes diadenosine 5',5'''-P1,P4-tetraphosphate to yield ADP. This chain is Bis(5'-nucleosyl)-tetraphosphatase, symmetrical, found in Escherichia coli O81 (strain ED1a).